The chain runs to 398 residues: Selenide, water dikinase (398 aa).

A disordered region spans residues 1 to 21 (MSHKRPQSSAGESNGAVDLKT). Residue Cys-46 is part of the active site. ATP contacts are provided by residues Lys-49, 72–74 (GMD), Asp-97, Asp-120, and 171–174 (GGQT). Residue Asp-74 participates in Mg(2+) binding. Asp-120 contributes to the Mg(2+) binding site. A Mg(2+)-binding site is contributed by Asp-278.

The protein belongs to the selenophosphate synthase 1 family. Class I subfamily. Homodimer. Requires Mg(2+) as cofactor.

The catalysed reaction is hydrogenselenide + ATP + H2O = selenophosphate + AMP + phosphate + 2 H(+). Synthesizes selenophosphate from selenide and ATP. The polypeptide is Selenide, water dikinase (Leishmania major).